Reading from the N-terminus, the 363-residue chain is Probable matrix metalloproteinase 095L (363 aa).

The first 25 residues, Met1–Ala25, serve as a signal peptide directing secretion. Residues Leu26–Lys126 constitute a propeptide, activation peptide. Residues Pro117–Val124 carry the Cysteine switch motif. Residues Cys119 and His275 each coordinate Zn(2+). Glu276 is an active-site residue. Residues His279 and His285 each contribute to the Zn(2+) site.

This sequence belongs to the peptidase M10A family. Zn(2+) serves as cofactor.

It localises to the secreted. Probable endopeptidase. The chain is Probable matrix metalloproteinase 095L from Aedes vexans (Inland floodwater mosquito).